The primary structure comprises 293 residues: Putative phosphoenolpyruvate synthase regulatory protein (293 aa).

Position 173–180 (173–180 (GVSRCGKT)) interacts with ADP.

Belongs to the pyruvate, phosphate/water dikinase regulatory protein family. PSRP subfamily.

It carries out the reaction [pyruvate, water dikinase] + ADP = [pyruvate, water dikinase]-phosphate + AMP + H(+). It catalyses the reaction [pyruvate, water dikinase]-phosphate + phosphate + H(+) = [pyruvate, water dikinase] + diphosphate. Its function is as follows. Bifunctional serine/threonine kinase and phosphorylase involved in the regulation of the phosphoenolpyruvate synthase (PEPS) by catalyzing its phosphorylation/dephosphorylation. The polypeptide is Putative phosphoenolpyruvate synthase regulatory protein (Photorhabdus laumondii subsp. laumondii (strain DSM 15139 / CIP 105565 / TT01) (Photorhabdus luminescens subsp. laumondii)).